A 175-amino-acid polypeptide reads, in one-letter code: Urease accessory protein UreE (175 aa).

Positions 151-175 (GGAYGGSPSHAHRHSHVHSHSHETP) are disordered. A compositionally biased stretch (basic residues) spans 160–169 (HAHRHSHVHS).

This sequence belongs to the UreE family.

The protein resides in the cytoplasm. Involved in urease metallocenter assembly. Binds nickel. Probably functions as a nickel donor during metallocenter assembly. This chain is Urease accessory protein UreE, found in Synechococcus sp. (strain WH7805).